Reading from the N-terminus, the 168-residue chain is Disulfide bond formation protein B 1 (168 aa).

The Cytoplasmic segment spans residues 1-14; it reads MNEQTSRLNRERRF. Residues 15–31 traverse the membrane as a helical segment; it reads LVLLGLICLSLIGGALY. Over 32 to 49 the chain is Periplasmic; sequence MQVVLGEAPCPLCILQRY. C41 and C44 are joined by a disulfide. Residues 50–65 form a helical membrane-spanning segment; the sequence is ALLFIAVFAFIAAAMP. Residues 66–72 lie on the Cytoplasmic side of the membrane; sequence GRRSLTF. The chain crosses the membrane as a helical span at residues 73 to 89; sequence FEALVVLSAIGGIVAAG. The Periplasmic segment spans residues 90-144; that stretch reads NHVYILANPMVSCGIDTLQPIVDDLPLAKLWPLAFQVDGFCSTPYPPILGLSLAQ. The cysteines at positions 102 and 130 are disulfide-linked. Residues 145–163 form a helical membrane-spanning segment; the sequence is WALVAFVLTAVLVPLGIYR. Over 164–168 the chain is Cytoplasmic; the sequence is NRRQA.

It belongs to the DsbB family.

The protein localises to the cell inner membrane. Functionally, required for disulfide bond formation in some periplasmic proteins. Acts by oxidizing the DsbA protein. The sequence is that of Disulfide bond formation protein B 1 (dsbB1) from Pseudomonas putida (strain ATCC 47054 / DSM 6125 / CFBP 8728 / NCIMB 11950 / KT2440).